The sequence spans 230 residues: Protein UPS2, mitochondrial (230 aa).

Residues 1 to 175 form the PRELI/MSF1 domain; the sequence is MKLFQNSYDF…VLQVFSENWE (175 aa).

Belongs to the slowmo family. As to quaternary structure, interacts with MDM35.

Its subcellular location is the mitochondrion inner membrane. It is found in the mitochondrion intermembrane space. Its function is as follows. Required for mitochondrial cristae morphogenesis and MGM1-processing. Controls the stability of mitochondrial phosphatidylethanolamine (PE). With UPS1, controls the level of cardiolipin in mitochondria. Cardiolipin is a unique phospholipid with four fatty acid chains and is present mainly in the mitochondrial inner membrane where it stabilizes the electron transport chain supercomplex between complexes III and IV through direct interaction of their subunits. The sequence is that of Protein UPS2, mitochondrial (UPS2) from Saccharomyces cerevisiae (strain ATCC 204508 / S288c) (Baker's yeast).